We begin with the raw amino-acid sequence, 325 residues long: Olfactory receptor 1S1 (325 aa).

Over 1 to 38 (MKTFSSFLQIGRNMHQGNQTTITEFILLGFFKQDEHQN) the chain is Extracellular. A glycan (N-linked (GlcNAc...) asparagine) is linked at Asn18. A helical transmembrane segment spans residues 39–62 (LLFVLFLGMYLVTVIGNGLIIVAI). Residues 63 to 70 (SLDTYLHT) are Cytoplasmic-facing. A helical membrane pass occupies residues 71–92 (PMYLFLANLSFADISSISNSVP). The Extracellular portion of the chain corresponds to 93-113 (KMLVNIQTKSQSISYESCITQ). The cysteines at positions 110 and 202 are disulfide-linked. The chain crosses the membrane as a helical span at residues 114 to 133 (MYFSIVFVVIDNLLLGTMAY). Topologically, residues 134–152 (DHFVAICHPLNYTILMRPR) are cytoplasmic. Residues 153-171 (FGILLTVISWFLSNIIALT) traverse the membrane as a helical segment. Over 172-208 (HTLLLIQLLFCNHNTLPHFFCDLAPLLKLSCSDTLIN) the chain is Extracellular. The chain crosses the membrane as a helical span at residues 209–232 (ELVLFIVGLSVIIFPFTLSFFSYV). Residues 233 to 249 (CIIRAVLRVSSTQGKWK) are Cytoplasmic-facing. The chain crosses the membrane as a helical span at residues 250–272 (AFSTCGSHLTVVLLFYGTIVGVY). The Extracellular portion of the chain corresponds to 273 to 285 (FFPSSTHPEDTDK). The chain crosses the membrane as a helical span at residues 286–305 (IGAVLFTVVTPMINPFIYSL). Residues 306–325 (RNKDMKGALRKLINRKISSL) are Cytoplasmic-facing.

It belongs to the G-protein coupled receptor 1 family.

Its subcellular location is the cell membrane. Odorant receptor. This chain is Olfactory receptor 1S1 (OR1S1), found in Homo sapiens (Human).